Consider the following 418-residue polypeptide: Glutamyl-tRNA reductase (418 aa).

Substrate contacts are provided by residues 49–52 (TCNR), serine 109, 114–116 (EPQ), and glutamine 120. Catalysis depends on cysteine 50, which acts as the Nucleophile. Residue 189–194 (GAGETI) participates in NADP(+) binding.

Belongs to the glutamyl-tRNA reductase family. As to quaternary structure, homodimer.

The enzyme catalyses (S)-4-amino-5-oxopentanoate + tRNA(Glu) + NADP(+) = L-glutamyl-tRNA(Glu) + NADPH + H(+). Its pathway is porphyrin-containing compound metabolism; protoporphyrin-IX biosynthesis; 5-aminolevulinate from L-glutamyl-tRNA(Glu): step 1/2. In terms of biological role, catalyzes the NADPH-dependent reduction of glutamyl-tRNA(Glu) to glutamate 1-semialdehyde (GSA). This Escherichia coli O9:H4 (strain HS) protein is Glutamyl-tRNA reductase.